The primary structure comprises 337 residues: tRNA N6-adenosine threonylcarbamoyltransferase (337 aa).

Residues H111 and H115 each coordinate Fe cation. Residues 134–138 (LVSGG), D167, G180, and N272 each bind substrate. A Fe cation-binding site is contributed by D300.

Belongs to the KAE1 / TsaD family. Fe(2+) is required as a cofactor.

The protein resides in the cytoplasm. It catalyses the reaction L-threonylcarbamoyladenylate + adenosine(37) in tRNA = N(6)-L-threonylcarbamoyladenosine(37) in tRNA + AMP + H(+). Its function is as follows. Required for the formation of a threonylcarbamoyl group on adenosine at position 37 (t(6)A37) in tRNAs that read codons beginning with adenine. Is involved in the transfer of the threonylcarbamoyl moiety of threonylcarbamoyl-AMP (TC-AMP) to the N6 group of A37, together with TsaE and TsaB. TsaD likely plays a direct catalytic role in this reaction. This is tRNA N6-adenosine threonylcarbamoyltransferase from Yersinia enterocolitica serotype O:8 / biotype 1B (strain NCTC 13174 / 8081).